Consider the following 501-residue polypeptide: Cryptochrome-1 (501 aa).

The region spanning lysine 5 to cysteine 134 is the Photolyase/cryptochrome alpha/beta domain. Residues tyrosine 231 and threonine 243 to serine 247 each bind FAD. Residue arginine 356 participates in ATP binding. FAD is bound by residues aspartate 386 and aspartate 388. Aspartate 405 provides a ligand contact to ATP.

The protein belongs to the DNA photolyase class-1 family. Homodimer. FAD is required as a cofactor. The cofactor is (6R)-5,10-methylene-5,6,7,8-tetrahydrofolate.

Mediates blue light-induced gene expression in addition to its role in blue light-dependent inhibition of stem growth. The chain is Cryptochrome-1 (PHR1) from Sinapis alba (White mustard).